We begin with the raw amino-acid sequence, 1624 residues long: ATP-binding cassette sub-family A member 6 (1624 aa).

A helical transmembrane segment spans residues 31–51 (LLEWSIPIIIGLHMGLFSYLA). Residues Asn-84 and Asn-91 are each glycosylated (N-linked (GlcNAc...) asparagine). The next 6 membrane-spanning stretches (helical) occupy residues 222-242 (IFIL…SSNV), 267-287 (WGLI…IIIT), 297-317 (FLVI…VTFL), 326-346 (VLTN…GFTV), 356-376 (EWVL…KVIF), and 395-415 (VMIA…VLAL). The region spanning 478-713 (IRIRNIKKEY…WGLGYHLSLF (236 aa)) is the ABC transporter 1 domain. Position 514–521 (514–521 (GHSGAGKS)) interacts with ATP. N-linked (GlcNAc...) asparagine glycosylation is present at Asn-576. 8 helical membrane-spanning segments follow: residues 854 to 874 (AFLI…IEYV), 971 to 991 (LHCF…MLNH), 1005 to 1025 (FIVL…CVIC), 1058 to 1078 (WCGQ…TSYF), 1094 to 1114 (IVFS…FLTY), 1130 to 1150 (WSIC…NGPF), 1154 to 1174 (LVIS…LVVL), and 1194 to 1214 (AVDL…IFVL). The ABC transporter 2 domain maps to 1282-1520 (LHKEYAGQKK…FGQDYVLELR (239 aa)). An ATP-binding site is contributed by 1320–1327 (GPDGAGKS).

Belongs to the ABC transporter superfamily. ABCA family. As to expression, widely expressed with higher expression in heart, lung, brain, spleen and testis.

It is found in the golgi apparatus membrane. In terms of biological role, probable transporter which may play a role in macrophage lipid transport and homeostasis. In Mus musculus (Mouse), this protein is ATP-binding cassette sub-family A member 6 (Abca6).